The chain runs to 397 residues: MNRFFYTVGLIFLFSFFILYSPKTSDLSNNVDLHQQLLISLQKEEERCDLFSGYWVQDLRGSQYTNVSCSSIPESKNCFMQGRPDAGFSQWRWKPDGCELPRFDPGTFFEIVRGKTMAFIGDSVARNHVESLLCLLSSEEMPLGIYKDTEDRTRTWYFPHSNFTLMVIWTRFLVLDEERVINGSVTGVFDLHLDKMDKNWANKLPEIDYAILSDAHWFFRKNYLYEKGKNIGCIFCGEPGIKSLDIDSALQMVIKVVLNYINNCKKCRNILTVLRTFSPAHFADGAWDTGGSCNRTHPLGEKEIDLASLDWKIRSIQVEEIKRVRPVARRRKKFEVLDVTKAMLMRPDGHPNSYWGNKWMKGYNDCVHWCMPGPIDAWNDFLIALLRRHAFTDFTWS.

Residues 1–3 lie on the Cytoplasmic side of the membrane; it reads MNR. Residues 4–24 traverse the membrane as a helical; Signal-anchor for type II membrane protein segment; that stretch reads FFYTVGLIFLFSFFILYSPKT. Over 25-397 the chain is Lumenal; the sequence is SDLSNNVDLH…RHAFTDFTWS (373 aa). 4 disulfides stabilise this stretch: C48–C98, C69–C134, C78–C370, and C293–C366. N-linked (GlcNAc...) asparagine glycosylation occurs at N66. A GDS motif motif is present at residues 121 to 123; the sequence is GDS. Residue S123 is the Nucleophile of the active site. N-linked (GlcNAc...) asparagine glycosylation is found at N162, N182, and N294. Residue D365 is the Proton donor of the active site. The DXXH motif motif lies at 365 to 368; that stretch reads DCVH. Catalysis depends on H368, which acts as the Proton acceptor.

It belongs to the PC-esterase family. TBL subfamily.

It localises to the golgi apparatus membrane. Its function is as follows. Xyloglucan acetyltransferase that catalyzes the acetylation of fucosylated Gal residues on xyloglucan side chains. Predominantly catalyze 6-O-monoacetylation of Gal residues in the Fuc-Gal-Xyl trisaccharide side chains of xyloglucan oligomers. This Populus trichocarpa (Western balsam poplar) protein is Xyloglucan O-acetyltransferase 3.